The chain runs to 430 residues: N-lysine methyltransferase SMYD2-A (430 aa).

The region spanning 5-239 (EGLERFDSPG…AGDEVFTSYI (235 aa)) is the SET domain. An S-adenosyl-L-methionine-binding site is contributed by 15–17 (KGR). The Zn(2+) site is built by cysteine 50, cysteine 53, cysteine 63, cysteine 66, cysteine 72, cysteine 76, histidine 84, and cysteine 88. An MYND-type zinc finger spans residues 50-88 (CDFCFARKEGLSKCGKCKQAFYCNVDCQKGDWPMHKLEC). Residues histidine 135, 204–205 (NH), and 256–258 (YFF) each bind S-adenosyl-L-methionine.

The protein belongs to the class V-like SAM-binding methyltransferase superfamily.

It localises to the cytoplasm. The protein resides in the cytosol. It is found in the nucleus. It carries out the reaction L-lysyl(4)-[histone H3] + 3 S-adenosyl-L-methionine = N(6),N(6),N(6)-trimethyl-L-lysyl(4)-[histone H3] + 3 S-adenosyl-L-homocysteine + 3 H(+). The enzyme catalyses L-lysyl-[protein] + S-adenosyl-L-methionine = N(6)-methyl-L-lysyl-[protein] + S-adenosyl-L-homocysteine + H(+). In terms of biological role, protein-lysine N-methyltransferase that methylates both histones and non-histone proteins, including p53/TP53 and RB1. Specifically trimethylates histone H3 'Lys-4' (H3K4me3) in vivo. The activity requires interaction with HSP90alpha. Shows even higher methyltransferase activity on p53/TP53. Monomethylates 'Lys-370' of p53/TP53, leading to decreased DNA-binding activity and subsequent transcriptional regulation activity of p53/TP53. Monomethylates RB1 at 'Lys-860'. This Xenopus laevis (African clawed frog) protein is N-lysine methyltransferase SMYD2-A (smyd2-a).